The chain runs to 627 residues: Phosphomethylpyrimidine synthase (627 aa).

The span at 1–24 (MSATQKNNITRLEQLDRQSTQPFP) shows a compositional bias: polar residues. A disordered region spans residues 1-29 (MSATQKNNITRLEQLDRQSTQPFPNSRKV). Substrate-binding positions include N231, M260, Y289, H325, 345–347 (SRG), 386–389 (DGLR), and E425. H429 lines the Zn(2+) pocket. Y452 provides a ligand contact to substrate. H493 lines the Zn(2+) pocket. C573, C576, and C581 together coordinate [4Fe-4S] cluster.

The protein belongs to the ThiC family. In terms of assembly, homodimer. [4Fe-4S] cluster serves as cofactor.

It carries out the reaction 5-amino-1-(5-phospho-beta-D-ribosyl)imidazole + S-adenosyl-L-methionine = 4-amino-2-methyl-5-(phosphooxymethyl)pyrimidine + CO + 5'-deoxyadenosine + formate + L-methionine + 3 H(+). The protein operates within cofactor biosynthesis; thiamine diphosphate biosynthesis. Functionally, catalyzes the synthesis of the hydroxymethylpyrimidine phosphate (HMP-P) moiety of thiamine from aminoimidazole ribotide (AIR) in a radical S-adenosyl-L-methionine (SAM)-dependent reaction. This chain is Phosphomethylpyrimidine synthase, found in Pseudomonas paraeruginosa (strain DSM 24068 / PA7) (Pseudomonas aeruginosa (strain PA7)).